An 89-amino-acid polypeptide reads, in one-letter code: Acylphosphatase (89 aa).

Residues 3 to 89 (ALEIYVSGNV…ENYESFEVAY (87 aa)) form the Acylphosphatase-like domain. Catalysis depends on residues arginine 18 and asparagine 36.

Belongs to the acylphosphatase family.

It carries out the reaction an acyl phosphate + H2O = a carboxylate + phosphate + H(+). The chain is Acylphosphatase (acyP) from Archaeoglobus fulgidus (strain ATCC 49558 / DSM 4304 / JCM 9628 / NBRC 100126 / VC-16).